A 217-amino-acid chain; its full sequence is Probable transaldolase (217 aa).

Lys83 functions as the Schiff-base intermediate with substrate in the catalytic mechanism.

The protein belongs to the transaldolase family. Type 3B subfamily.

The protein resides in the cytoplasm. The enzyme catalyses D-sedoheptulose 7-phosphate + D-glyceraldehyde 3-phosphate = D-erythrose 4-phosphate + beta-D-fructose 6-phosphate. It participates in carbohydrate degradation; pentose phosphate pathway; D-glyceraldehyde 3-phosphate and beta-D-fructose 6-phosphate from D-ribose 5-phosphate and D-xylulose 5-phosphate (non-oxidative stage): step 2/3. Functionally, transaldolase is important for the balance of metabolites in the pentose-phosphate pathway. In Pseudothermotoga lettingae (strain ATCC BAA-301 / DSM 14385 / NBRC 107922 / TMO) (Thermotoga lettingae), this protein is Probable transaldolase.